A 266-amino-acid polypeptide reads, in one-letter code: MAVSLRDTVKISEFINLSKQDEILPAFMTKVKSVRISTVDKIMAVKNDSLSDVDLLKGVKLVKNGYVCLAGLVVSGEWNLPDNCRGGVSVCIVDKRMKRSNEATLGAYHAPACKKNFSFKLIPNYSITSEDAEKNPWQVLVNIKGVAMEEGYCPLSLEFVSICVVHKNNVKKGLRERILRVTDDSPIELTEKVVEEFVDEVPMAVKLERFRKTKKGKKRKKEKKKRVVGNSVNNKKINNSGKKGLKVEEIEDNVSDDESIASSSTF.

Over residues 212–227 the composition is skewed to basic residues; sequence KTKKGKKRKKEKKKRV. Positions 212 to 266 are disordered; it reads KTKKGKKRKKEKKKRVVGNSVNNKKINNSGKKGLKVEEIEDNVSDDESIASSSTF. Residues 228–242 show a composition bias toward low complexity; that stretch reads VGNSVNNKKINNSGK. Positions 249-259 are enriched in acidic residues; the sequence is EIEDNVSDDES.

This sequence belongs to the tobamovirus movement protein family.

It is found in the host cytoplasm. Its subcellular location is the host cytoskeleton. The protein localises to the host cell junction. The protein resides in the host plasmodesma. Functionally, transports viral genome to neighboring plant cells directly through plasmosdesmata, without any budding. The movement protein allows efficient cell to cell propagation, by bypassing the host cell wall barrier. Forms a ribonucleoprotein complex with viral RNA. Binds microtubules and modulates microtubule stability. Can bind double-stranded DNA. The protein is Movement protein (MP) of Capsicum annuum (Capsicum pepper).